Consider the following 230-residue polypeptide: MRLAGPLRIVVLVVSVGVTWIVVSILLGGPGSGFPRIQQLFTSPESSVTAAPRARKYKCGLPQPCPEEHLAFRVVSGAANVIGPKICLEDKMLMSSVKDNVGRGLNIALVNGVSGELIEARAFDMWAGDVNDLLKFIRPLHEGTLVFVASYDDPATKMNEETRKLFSELGSRNAKELAFRDSWVFVGAKGVQNKSPFEQHVKNSKHSNKYEGWPEALEMEGCIPRRSTAS.

The first 33 residues, Met-1–Gly-33, serve as a signal peptide directing secretion. 2 cysteine pairs are disulfide-bonded: Cys-59/Cys-87 and Cys-65/Cys-222. One can recognise a GG-type lectin domain in the interval Glu-68–Arg-226.

It belongs to the FAM3 family. In similar amounts in testis, pancreas, adrenal, placenta, brain, fetal brain, liver, kidney, skeletal muscle and heart.

Its subcellular location is the secreted. Its function is as follows. May act as a defensin against invading fungal microorganisms. The sequence is that of Protein FAM3A (FAM3A) from Homo sapiens (Human).